The primary structure comprises 396 residues: Elongation factor Tu (396 aa).

One can recognise a tr-type G domain in the interval 10-206 (KPHCNIGTIG…AVDAYIPQPE (197 aa)). A G1 region spans residues 19–26 (GHVDHGKT). Residue 19 to 26 (GHVDHGKT) participates in GTP binding. T26 serves as a coordination point for Mg(2+). Residues 60 to 64 (GITIS) are G2. The G3 stretch occupies residues 81 to 84 (DCPG). GTP contacts are provided by residues 81–85 (DCPGH) and 136–139 (NKCD). The G4 stretch occupies residues 136-139 (NKCD). Residues 174 to 176 (SAL) are G5.

The protein belongs to the TRAFAC class translation factor GTPase superfamily. Classic translation factor GTPase family. EF-Tu/EF-1A subfamily. Monomer.

It localises to the cytoplasm. The catalysed reaction is GTP + H2O = GDP + phosphate + H(+). Functionally, GTP hydrolase that promotes the GTP-dependent binding of aminoacyl-tRNA to the A-site of ribosomes during protein biosynthesis. The polypeptide is Elongation factor Tu (Nitrobacter winogradskyi (strain ATCC 25391 / DSM 10237 / CIP 104748 / NCIMB 11846 / Nb-255)).